The following is a 759-amino-acid chain: 1,4-alpha-glucan branching enzyme GlgB (759 aa).

The segment at methionine 1–histidine 22 is disordered. Aspartate 422 serves as the catalytic Nucleophile. Catalysis depends on glutamate 475, which acts as the Proton donor.

Belongs to the glycosyl hydrolase 13 family. GlgB subfamily. Monomer.

The enzyme catalyses Transfers a segment of a (1-&gt;4)-alpha-D-glucan chain to a primary hydroxy group in a similar glucan chain.. It participates in glycan biosynthesis; glycogen biosynthesis. In terms of biological role, catalyzes the formation of the alpha-1,6-glucosidic linkages in glycogen by scission of a 1,4-alpha-linked oligosaccharide from growing alpha-1,4-glucan chains and the subsequent attachment of the oligosaccharide to the alpha-1,6 position. The chain is 1,4-alpha-glucan branching enzyme GlgB from Mycobacterium sp. (strain KMS).